The following is a 504-amino-acid chain: Peroxisomal catalase (504 aa).

Active-site residues include H63 and N136. Y345 is a heme binding site. Residues 502 to 504 carry the Microbody targeting signal motif; the sequence is NKF.

It belongs to the catalase family. It depends on heme as a cofactor.

The protein resides in the peroxisome matrix. It carries out the reaction 2 H2O2 = O2 + 2 H2O. Its function is as follows. Catalyzes the degradation of hydrogen peroxide (H(2)O(2)) generated by peroxisomal oxidases to water and oxygen, thereby protecting cells from the toxic effects of hydrogen peroxide. The polypeptide is Peroxisomal catalase (CTA1) (Candida boidinii (Yeast)).